The following is a 665-amino-acid chain: MSGGGGDDVVCTGWLRKSPPEKKLRRYAWKKRWFILRSGRMSGDPDVLEYYKNEHSKKPLRIINLNLCEQVDAGLTFNKKELQDSFVFDIKTSERTFYLVAETEADMNKWVQSICQICGFNQAEESTDSLRNLSSASHGPRSSPAEFSSSQHLLRERKSSAPSHSSQPTLFTFEPPVSSHMQPTLSTSAPQEYLYLHQCISRRTENARSASFSQGTRQKSDTAVQKLAQSNGHCINGVGGQVHGFYSLPKPSRHNTEFKDSTYDLPRSLASHGHTKSSLTGSETDNEDVYTFKMPSNTLCRELGDLLVDNMDVPTTPLSAYQIPRTFTLDKNHNAMTVATPGDSAIAPPPRPPKPSQAETSQWGSIQQRPPISENSRSVAATIPRRNTLPAMDNSRLHRASSCETYEYPARGSGESASWSAEPPGKTAVGRSNSASSDDNYVPMNPGSSTLLAMERPGDNSQSVYIPMSPGPHHFDPLGYPSTALPIHRGPSRGSEIQPPPVNRNLKPDRKAKPTPLDLRNNTVIDELPFKSPVTKSWSRINHTFNSSSSQYCRPISTQSITSTDSGDSEENYVPMQNPVSASPVPSGTNSPAPKKSTGSVDYLALDFQPGSPSPHRKPSTSSVTSDEKVDYVQVDKEKTQALQNTMQEWTDVRQSSEPSKGAKL.

Ser-2 carries the phosphoserine modification. Residues 8-119 (DVVCTGWLRK…WVQSICQICG (112 aa)) form the PH domain. Residues 131-184 (RNLSSASHGPRSSPAEFSSSQHLLRERKSSAPSHSSQPTLFTFEPPVSSHMQPT) form a disordered region. Residues Ser-135, Ser-142, Ser-143, Ser-149, Ser-150, Ser-160, Ser-165, Ser-211, Ser-220, and Ser-261 each carry the phosphoserine modification. Positions 160 to 170 (SAPSHSSQPTL) are enriched in polar residues. Thr-262 carries the post-translational modification Phosphothreonine. Tyr-263 carries the post-translational modification Phosphotyrosine. Residue Thr-275 is modified to Phosphothreonine. Phosphoserine occurs at positions 278 and 282. Thr-284 is modified (phosphothreonine). Tyr-290 carries the post-translational modification Phosphotyrosine. A Phosphothreonine modification is found at Thr-328. The segment at 338 to 396 (VATPGDSAIAPPPRPPKPSQAETSQWGSIQQRPPISENSRSVAATIPRRNTLPAMDNSR) is disordered. The SH3-binding signature appears at 348 to 355 (PPPRPPKP). Residues 357 to 379 (QAETSQWGSIQQRPPISENSRSV) are compositionally biased toward polar residues. Ser-365 carries the post-translational modification Phosphoserine. Phosphothreonine is present on residues Thr-382 and Thr-388. A Phosphoserine modification is found at Ser-402. Phosphothreonine is present on Thr-405. The disordered stretch occupies residues 408–445 (YPARGSGESASWSAEPPGKTAVGRSNSASSDDNYVPMN). Ser-420 is subject to Phosphoserine. The span at 430-439 (GRSNSASSDD) shows a compositional bias: polar residues. Tyr-441 bears the Phosphotyrosine mark. A Phosphoserine modification is found at Ser-469. A disordered region spans residues 491 to 517 (PSRGSEIQPPPVNRNLKPDRKAKPTPL). The short motif at 499–508 (PPPVNRNLKP) is the SH3-binding element. Ser-532 is subject to Phosphoserine. 2 stretches are compositionally biased toward polar residues: residues 548 to 566 (SSSQYCRPISTQSITSTDS) and 578 to 600 (NPVSASPVPSGTNSPAPKKSTGS). 2 disordered regions span residues 548–632 (SSSQ…KVDY) and 646–665 (TMQEWTDVRQSSEPSKGAKL). Ser-612 carries the post-translational modification Phosphoserine. Tyr-632 is subject to Phosphotyrosine. Residues 646–659 (TMQEWTDVRQSSEP) are compositionally biased toward polar residues.

This sequence belongs to the GAB family. In terms of assembly, part of a complex composed of EEIG1, TNFRSF11A/RANK, PLCG2, GAB2, TEC and BTK; complex formation increases in the presence of TNFSF11/RANKL. Interacts with HCK. Interacts with SHC1; may mediate interaction with receptors. Interacts with SYK. Interacts with PI-3 kinase. Interacts with GRB2 (via SH3 2 domain). Interacts (phosphorylated) with PTPN11. Interacts with TNFRSF11A (via cytoplasmic domain). Interacts (phosphorylated) with 14-3-3 family proteins SFN, YWHAB, YWHAE, YWHAG, YWHAH, YWHAQ and YWHAZ; prevents interaction with GRB2 and attenuates GAB2 signaling. Post-translationally, phosphorylated upon EGF stimulation. Phosphorylated on tyrosine residues by HCK upon IL6 signaling. Phosphorylated on tyrosine residue(s) by the thrombopoietin receptor (TPOR), stem cell factor receptor (SCFR), and T-cell and B-cell antigen receptors, gp130, IL-2R and IL-3R. Phosphorylated upon stimulation of TNFRSF11A/RANK by TNFSF11/RANKL. Dephosphorylated by PTPN11. In terms of tissue distribution, ubiquitously expressed.

It localises to the cytoplasm. Its subcellular location is the cell membrane. The protein localises to the membrane raft. Adapter protein which acts downstream of several membrane receptors including cytokine, antigen, hormone, cell matrix and growth factor receptors to regulate multiple signaling pathways. Regulates osteoclast differentiation mediating the TNFRSF11A/RANK signaling. In allergic response, it plays a role in mast cells activation and degranulation through PI-3-kinase regulation. Also involved in the regulation of cell proliferation and hematopoiesis. The chain is GRB2-associated-binding protein 2 (Gab2) from Mus musculus (Mouse).